A 368-amino-acid polypeptide reads, in one-letter code: Anhydro-N-acetylmuramic acid kinase (368 aa).

An ATP-binding site is contributed by 13 to 20; sequence GTSLDGVD.

Belongs to the anhydro-N-acetylmuramic acid kinase family.

The enzyme catalyses 1,6-anhydro-N-acetyl-beta-muramate + ATP + H2O = N-acetyl-D-muramate 6-phosphate + ADP + H(+). It functions in the pathway amino-sugar metabolism; 1,6-anhydro-N-acetylmuramate degradation. Its pathway is cell wall biogenesis; peptidoglycan recycling. Its function is as follows. Catalyzes the specific phosphorylation of 1,6-anhydro-N-acetylmuramic acid (anhMurNAc) with the simultaneous cleavage of the 1,6-anhydro ring, generating MurNAc-6-P. Is required for the utilization of anhMurNAc either imported from the medium or derived from its own cell wall murein, and thus plays a role in cell wall recycling. The polypeptide is Anhydro-N-acetylmuramic acid kinase (Hahella chejuensis (strain KCTC 2396)).